We begin with the raw amino-acid sequence, 221 residues long: Intraflagellar transport-associated protein (221 aa).

At Ser-59 the chain carries Phosphoserine.

In terms of assembly, interacts with IFT122; the interaction associates IFTAP with IFT-A complex.

Functionally, seems to play a role in ciliary BBSome localization, maybe through interaction with IFT-A complex. This Homo sapiens (Human) protein is Intraflagellar transport-associated protein.